Reading from the N-terminus, the 622-residue chain is DNA mismatch repair protein MutL (622 aa).

The protein belongs to the DNA mismatch repair MutL/HexB family.

This protein is involved in the repair of mismatches in DNA. It is required for dam-dependent methyl-directed DNA mismatch repair. May act as a 'molecular matchmaker', a protein that promotes the formation of a stable complex between two or more DNA-binding proteins in an ATP-dependent manner without itself being part of a final effector complex. This chain is DNA mismatch repair protein MutL, found in Phenylobacterium zucineum (strain HLK1).